Here is a 316-residue protein sequence, read N- to C-terminus: Transcription termination/antitermination protein NusG (316 aa).

It belongs to the NusG family.

Its function is as follows. Participates in transcription elongation, termination and antitermination. The protein is Transcription termination/antitermination protein NusG of Mycoplasma genitalium (strain ATCC 33530 / DSM 19775 / NCTC 10195 / G37) (Mycoplasmoides genitalium).